The chain runs to 1350 residues: Probable serine/threonine-protein kinase DDB_G0278845 (1350 aa).

Disordered stretches follow at residues 66–109 (RELN…NNIR), 121–159 (ENGLLESPTSPIRTSSTPTTPTSPPFITSPPFITSPKGL), 179–249 (LANN…LNSI), 270–296 (SSINGNTTTTTTNTYSYNDNDNVNEYS), 337–396 (NNYN…RDDL), 431–506 (GSTI…EKKK), 525–596 (NDSN…IPTP), and 612–701 (NNNS…NTNE). Residues 84–98 (KYLTSSHSSVVIPQD) are compositionally biased toward polar residues. 2 stretches are compositionally biased toward low complexity: residues 127–140 (SPTSPIRTSSTPTT) and 181–210 (NNNNNNNNSNNSNNNSNSSNSNISCSNNSN). A compositionally biased stretch (polar residues) spans 211 to 222 (KISRLINNSNTT). Low complexity predominate over residues 223-235 (DSNASIRSSNNNN). A compositionally biased stretch (acidic residues) spans 236–246 (DDFDNNDDEDL). 2 stretches are compositionally biased toward low complexity: residues 270-293 (SSINGNTTTTTTNTYSYNDNDNVN) and 337-391 (NNYN…GYNN). Polar residues predominate over residues 431–443 (GSTIFTSTSSDIA). Acidic residues predominate over residues 454-482 (NENENENENENENENENDNDSDSENENEN). Composition is skewed to low complexity over residues 483-495 (DNSIGNKSNKSNS) and 525-551 (NDSNNNNNNNNSGNNNSFISNGSPFSP). Positions 565–592 (PKPTLQRQRSNSKNVLYSPNASPSNSCK) are enriched in polar residues. 3 stretches are compositionally biased toward low complexity: residues 612–637 (NNNSNNIENQNNNNNNIDNNIDNNID), 645–679 (NNNNNNNNNNNNNNNNNNNNNNNNNNNNNNNNNNN), and 690–701 (KKTPNNKINTNE). In terms of domain architecture, Protein kinase spans 756-1082 (FTLIEKIGEG…VENIKNHIFF (327 aa)). Residues 762-770 (IGEGGFGQV) and Lys-785 contribute to the ATP site. Asp-880 (proton acceptor) is an active-site residue. An AGC-kinase C-terminal domain is found at 1083–1203 (NGVPWGKLHD…PRADDQPLLW (121 aa)). 4 disordered regions span residues 1129–1159 (SLLPPPLPPPPQTPTQPQQPSLPPQTPNDKM), 1190–1219 (GFTYPRADDQPLLWNNNNNNNNNNNNNNNN), 1232–1285 (NNNN…NKTV), and 1300–1350 (NCNN…KQQQ). The segment covering 1131–1142 (LPPPLPPPPQTP) has biased composition (pro residues). Low complexity-rich tracts occupy residues 1204 to 1219 (NNNNNNNNNNNNNNNN), 1232 to 1283 (NNNN…SNNK), and 1300 to 1313 (NCNNNNNNDENNIN). 2 stretches are compositionally biased toward polar residues: residues 1314–1330 (TGNLTPPNSSPFNSGEN) and 1338–1350 (PTSPYGSYSKQQQ).

This sequence belongs to the protein kinase superfamily. AGC Ser/Thr protein kinase family.

The catalysed reaction is L-seryl-[protein] + ATP = O-phospho-L-seryl-[protein] + ADP + H(+). It catalyses the reaction L-threonyl-[protein] + ATP = O-phospho-L-threonyl-[protein] + ADP + H(+). This chain is Probable serine/threonine-protein kinase DDB_G0278845, found in Dictyostelium discoideum (Social amoeba).